We begin with the raw amino-acid sequence, 161 residues long: Putative pre-16S rRNA nuclease (161 aa).

The protein belongs to the YqgF nuclease family.

The protein localises to the cytoplasm. Could be a nuclease involved in processing of the 5'-end of pre-16S rRNA. The sequence is that of Putative pre-16S rRNA nuclease from Bradyrhizobium sp. (strain ORS 278).